Here is a 163-residue protein sequence, read N- to C-terminus: Single-stranded DNA-binding protein 1 (163 aa).

One can recognise an SSB domain in the interval 1–104 (MINNVVLVGR…VVAESFQLLE (104 aa)). The tract at residues 106-163 (RATREGGSPNSYNNGGYNNAPSNNSYSASSQQTPNFSRDESPFGNSNPMDISDDDLPF) is disordered. The span at 111–135 (GGSPNSYNNGGYNNAPSNNSYSASS) shows a compositional bias: low complexity. The Important for interaction with partner proteins signature appears at 158–163 (DDDLPF).

In terms of assembly, homotetramer.

In terms of biological role, plays an important role in DNA replication, recombination and repair. Binds to ssDNA and to an array of partner proteins to recruit them to their sites of action during DNA metabolism. This Streptococcus agalactiae serotype III (strain NEM316) protein is Single-stranded DNA-binding protein 1 (ssb1).